The following is a 495-amino-acid chain: tRNA modification GTPase MnmE (495 aa).

3 residues coordinate (6S)-5-formyl-5,6,7,8-tetrahydrofolate: R28, E89, and K128. One can recognise a TrmE-type G domain in the interval 223 to 417 (GVRIVLGGCP…LRAQTLHLLH (195 aa)). N233 is a binding site for K(+). Residues 233 to 238 (NAGKSS), 252 to 258 (SSVPGTT), and 277 to 280 (DTAG) contribute to the GTP site. S237 provides a ligand contact to Mg(2+). K(+)-binding residues include S252, V254, and T257. T258 lines the Mg(2+) pocket. K495 lines the (6S)-5-formyl-5,6,7,8-tetrahydrofolate pocket.

This sequence belongs to the TRAFAC class TrmE-Era-EngA-EngB-Septin-like GTPase superfamily. TrmE GTPase family. In terms of assembly, homodimer. Heterotetramer of two MnmE and two MnmG subunits. The cofactor is K(+).

The protein localises to the cytoplasm. In terms of biological role, exhibits a very high intrinsic GTPase hydrolysis rate. Involved in the addition of a carboxymethylaminomethyl (cmnm) group at the wobble position (U34) of certain tRNAs, forming tRNA-cmnm(5)s(2)U34. This Treponema pallidum (strain Nichols) protein is tRNA modification GTPase MnmE.